The sequence spans 491 residues: Cobyric acid synthase (491 aa).

The GATase cobBQ-type domain maps to 250 to 437; that stretch reads RLRVVVPVLP…LHGIFDHPAA (188 aa). The active-site Nucleophile is the C331. H429 is an active-site residue.

This sequence belongs to the CobB/CobQ family. CobQ subfamily.

It functions in the pathway cofactor biosynthesis; adenosylcobalamin biosynthesis. Its function is as follows. Catalyzes amidations at positions B, D, E, and G on adenosylcobyrinic A,C-diamide. NH(2) groups are provided by glutamine, and one molecule of ATP is hydrogenolyzed for each amidation. This Xanthomonas campestris pv. campestris (strain B100) protein is Cobyric acid synthase.